The following is a 229-amino-acid chain: 2-C-methyl-D-erythritol 4-phosphate cytidylyltransferase (229 aa).

This sequence belongs to the IspD/TarI cytidylyltransferase family. IspD subfamily.

The catalysed reaction is 2-C-methyl-D-erythritol 4-phosphate + CTP + H(+) = 4-CDP-2-C-methyl-D-erythritol + diphosphate. The protein operates within isoprenoid biosynthesis; isopentenyl diphosphate biosynthesis via DXP pathway; isopentenyl diphosphate from 1-deoxy-D-xylulose 5-phosphate: step 2/6. Catalyzes the formation of 4-diphosphocytidyl-2-C-methyl-D-erythritol from CTP and 2-C-methyl-D-erythritol 4-phosphate (MEP). This Bacillus pumilus (strain SAFR-032) protein is 2-C-methyl-D-erythritol 4-phosphate cytidylyltransferase.